We begin with the raw amino-acid sequence, 104 residues long: uncharacterized protein (104 aa).

Belongs to the mimivirus L28/L54 family.

This is an uncharacterized protein from Acanthamoeba polyphaga mimivirus (APMV).